Consider the following 634-residue polypeptide: Chaperone protein DnaK (634 aa).

A Phosphothreonine; by autocatalysis modification is found at threonine 198. Residues 599–634 are disordered; it reads KQTQEGAEAASEAGEQSAGDEGVVDAEFEEVDEQNK. Over residues 602 to 619 the composition is skewed to low complexity; that stretch reads QEGAEAASEAGEQSAGDE. Residues 620-634 show a composition bias toward acidic residues; sequence GVVDAEFEEVDEQNK.

It belongs to the heat shock protein 70 family.

Its function is as follows. Acts as a chaperone. This is Chaperone protein DnaK from Syntrophotalea carbinolica (strain DSM 2380 / NBRC 103641 / GraBd1) (Pelobacter carbinolicus).